The sequence spans 203 residues: Urease accessory protein UreG (203 aa).

A GTP-binding site is contributed by 14 to 21 (GPVGSGKT).

Belongs to the SIMIBI class G3E GTPase family. UreG subfamily. As to quaternary structure, homodimer. UreD, UreF and UreG form a complex that acts as a GTP-hydrolysis-dependent molecular chaperone, activating the urease apoprotein by helping to assemble the nickel containing metallocenter of UreC. The UreE protein probably delivers the nickel.

It localises to the cytoplasm. In terms of biological role, facilitates the functional incorporation of the urease nickel metallocenter. This process requires GTP hydrolysis, probably effectuated by UreG. This Rhizobium meliloti (strain 1021) (Ensifer meliloti) protein is Urease accessory protein UreG.